The sequence spans 442 residues: Adenylosuccinate synthetase (442 aa).

GTP is bound by residues 25–31, 53–55, and Lys-62; these read GDEGKGK and GHT. Asp-26 functions as the Proton acceptor in the catalytic mechanism. Mg(2+)-binding residues include Asp-26 and Gly-53. IMP contacts are provided by residues 26–29 and 51–54; these read DEGK and NAGH. His-54 functions as the Proton donor in the catalytic mechanism. The IMP site is built by Thr-141, Arg-155, Asn-232, and Thr-247. Position 307 (Thr-307) interacts with GTP. 307 to 313 provides a ligand contact to substrate; it reads TTTKRPR. Arg-311 serves as a coordination point for IMP. GTP is bound by residues Arg-313, 339–341, and 425–427; these read KLD and GVG.

The protein belongs to the adenylosuccinate synthetase family. As to quaternary structure, homodimer. Mg(2+) serves as cofactor.

It localises to the cytoplasm. It catalyses the reaction IMP + L-aspartate + GTP = N(6)-(1,2-dicarboxyethyl)-AMP + GDP + phosphate + 2 H(+). Its pathway is purine metabolism; AMP biosynthesis via de novo pathway; AMP from IMP: step 1/2. With respect to regulation, inhibited by hadacidin. Activated by fructose 1,6-bisphosphate. Plays an important role in the salvage pathway for purine nucleotide biosynthesis. Catalyzes the first committed step in the biosynthesis of AMP from IMP. This Plasmodium falciparum protein is Adenylosuccinate synthetase (Adss).